A 1171-amino-acid polypeptide reads, in one-letter code: Pesticidal crystal protein Cry1Ea (1171 aa).

The interval 1094–1124 (ESNSSVHASVYEEKSYTDRRRENPCESNRGY) is disordered. The span at 1103–1117 (VYEEKSYTDRRRENP) shows a compositional bias: basic and acidic residues.

Belongs to the delta endotoxin family.

In terms of biological role, promotes colloidosmotic lysis by binding to the midgut epithelial cells of many lepidopteran larvae including Spodoptera species. This Bacillus thuringiensis subsp. kenyae protein is Pesticidal crystal protein Cry1Ea (cry1Ea).